A 268-amino-acid chain; its full sequence is Tryptophan synthase alpha chain (268 aa).

Catalysis depends on proton acceptor residues Glu-49 and Asp-60.

This sequence belongs to the TrpA family. As to quaternary structure, tetramer of two alpha and two beta chains.

It carries out the reaction (1S,2R)-1-C-(indol-3-yl)glycerol 3-phosphate + L-serine = D-glyceraldehyde 3-phosphate + L-tryptophan + H2O. It participates in amino-acid biosynthesis; L-tryptophan biosynthesis; L-tryptophan from chorismate: step 5/5. Its function is as follows. The alpha subunit is responsible for the aldol cleavage of indoleglycerol phosphate to indole and glyceraldehyde 3-phosphate. This Escherichia coli O139:H28 (strain E24377A / ETEC) protein is Tryptophan synthase alpha chain.